Here is a 290-residue protein sequence, read N- to C-terminus: 3-keto-disaccharide hydrolase (290 aa).

The first 19 residues, 1 to 19, serve as a signal peptide directing secretion; the sequence is MKKVFYPLACCLAAGVLVS. Cys20 carries the N-palmitoyl cysteine lipid modification. A lipid anchor (S-diacylglycerol cysteine) is attached at Cys20.

The protein resides in the cell membrane. It carries out the reaction 3-dehydro-alpha,alpha-trehalose + H2O = 3-dehydro-D-glucose + D-glucose. 3-keto-disaccharide hydrolase that preferentially hydrolyzes 3-keto-trehalose (3-dehydro-alpha,alpha-trehalose). Important for disaccharide utilization in the human gut. Also shows hydrolysis activity with the glucosinolates glucoraphanin or glucobrassicin, but with much lower efficiency. The polypeptide is 3-keto-disaccharide hydrolase (Bacteroides thetaiotaomicron (strain ATCC 29148 / DSM 2079 / JCM 5827 / CCUG 10774 / NCTC 10582 / VPI-5482 / E50)).